Here is a 409-residue protein sequence, read N- to C-terminus: Glutamyl-tRNA reductase (409 aa).

Substrate contacts are provided by residues 46–49 (TCNR), Ser-88, 93–95 (ENE), and Gln-99. The active-site Nucleophile is Cys-47. 164 to 169 (GNGMIA) is an NADP(+) binding site.

Belongs to the glutamyl-tRNA reductase family. Homodimer.

The catalysed reaction is (S)-4-amino-5-oxopentanoate + tRNA(Glu) + NADP(+) = L-glutamyl-tRNA(Glu) + NADPH + H(+). Its pathway is porphyrin-containing compound metabolism; protoporphyrin-IX biosynthesis; 5-aminolevulinate from L-glutamyl-tRNA(Glu): step 1/2. Catalyzes the NADPH-dependent reduction of glutamyl-tRNA(Glu) to glutamate 1-semialdehyde (GSA). The protein is Glutamyl-tRNA reductase of Thermoplasma acidophilum (strain ATCC 25905 / DSM 1728 / JCM 9062 / NBRC 15155 / AMRC-C165).